Reading from the N-terminus, the 999-residue chain is Hypoxia up-regulated protein 1 (999 aa).

The signal sequence occupies residues Met1–Thr32. Asn155, Asn222, and Asn515 each carry an N-linked (GlcNAc...) asparagine glycan. The segment at Val564–Lys694 is disordered. The residue at position 567 (Ser567) is a Phosphoserine. The span at Leu574 to Ser583 shows a compositional bias: polar residues. Asn596 carries an N-linked (GlcNAc...) asparagine glycan. Composition is skewed to basic and acidic residues over residues Gly611–Thr626 and Pro641–Gly670. N-linked (GlcNAc...) asparagine glycans are attached at residues Asn830, Asn862, and Asn869. N6-acetyllysine is present on Lys883. The segment at Ala909 to Leu999 is disordered. 2 N-linked (GlcNAc...) asparagine glycosylation sites follow: Asn922 and Asn931. Residues Glu949 to Thr962 are compositionally biased toward basic and acidic residues. The Prevents secretion from ER signature appears at Asn996 to Leu999.

It belongs to the heat shock protein 70 family. As to quaternary structure, part of a large chaperone multiprotein complex comprising DNAJB11, HSP90B1, HSPA5, HYOU, PDIA2, PDIA4, PDIA6, PPIB, SDF2L1, UGGT1 and very small amounts of ERP29, but not, or at very low levels, CALR nor CANX.

The protein resides in the endoplasmic reticulum lumen. Its function is as follows. Has a pivotal role in cytoprotective cellular mechanisms triggered by oxygen deprivation. Promotes HSPA5/BiP-mediated ATP nucleotide exchange and thereby activates the unfolded protein response (UPR) pathway in the presence of endoplasmic reticulum stress. May play a role as a molecular chaperone and participate in protein folding. This chain is Hypoxia up-regulated protein 1 (HYOU1), found in Cricetulus griseus (Chinese hamster).